Consider the following 104-residue polypeptide: Naphthalene 1,2-dioxygenase system, ferredoxin component (104 aa).

One can recognise a Rieske domain in the interval Ile6 to Ile101. [2Fe-2S] cluster-binding residues include Cys45, His47, Cys64, and His67.

It belongs to the bacterial ring-hydroxylating dioxygenase ferredoxin component family. As to quaternary structure, the naphthalene dioxygenase (NDO) multicomponent enzyme system is composed of an electron transfer component and a dioxygenase component (iron sulfur protein (ISP)). The electron transfer component is composed of a ferredoxin reductase (NdoR) and a ferredoxin (NdoA), and the dioxygenase component is formed of a heterohexamer (trimer of heterodimers) of three large alpha subunits (NdoB) and three small beta subunits (NdoC). [2Fe-2S] cluster is required as a cofactor.

The protein operates within aromatic compound metabolism; naphthalene degradation. Component of the naphthalene dioxygenase (NDO) multicomponent enzyme system which catalyzes the incorporation of both atoms of molecular oxygen into naphthalene to form cis-(1R,2S)-dihydroxy-1,2-dihydronaphthalene. Functions as an intermediate electron transfer protein via a specific interaction with iron sulfur protein components (ISP) (NdoB and NdoC). This is Naphthalene 1,2-dioxygenase system, ferredoxin component from Pseudomonas aeruginosa.